A 521-amino-acid polypeptide reads, in one-letter code: MSELAAALTAAMRTGGSDLVVFDRESAAWRRHRWPEVHGLAEGIAAWLLDRDRPAALGLVGEPTLEFVAAIVGAWLAGAGVSILPGPVRGAEGRRWADTTLTRFAGIGVRTVLSHGSHLDALQALDPSRPDEMVVEDLAVAANTGRRCPEPPAPHANPAILQGTAGSTGTPKTAALSPDAVLANLRGLNARLGVTPADVGCSWLPLYHDMGLSFLLASALGGMSLWLAPTSAFTASPFRWLAWLSESRATITAAPNFAYNLVGKYARRVSGVDLGALRVAINGGEPVDCAGFERFTTAMAPFGFDAGAATPSYGLAEATCAVSVPAPGTGLRFADVSDETGTRRHAVLGAPIPGTEIRISPRHDAPDGIGEIEIRGASMMDGYLGHAPIDHQNWFPTGDLGFFSDDGLVVCGRAKELITLAGRNIFPTEIETVAAQVPGVREGAVVALGTGENSARPGLIIAAEFAGRDRAGARAEVIQRVASVCGVVPSDVIFMAPGSLPRTSSGKLRRLDVRRSLEAVD.

The disordered stretch occupies residues 146–172; the sequence is RRCPEPPAPHANPAILQGTAGSTGTPK.

This sequence belongs to the ATP-dependent AMP-binding enzyme family.

The enzyme catalyses a long-chain fatty acid + holo-[ACP] + ATP = a long-chain fatty acyl-[ACP] + AMP + diphosphate. It catalyses the reaction a medium-chain fatty acid + holo-[ACP] + ATP = a medium-chain fatty acyl-[ACP] + AMP + diphosphate. It functions in the pathway siderophore biosynthesis; mycobactin biosynthesis. Functionally, activates lipidic moieties required for mycobactin biosynthesis. Converts medium- to long-chain aliphatic fatty acids into acyl adenylate, which is further transferred on to the phosphopantetheine arm of the carrier protein MbtL. This Mycolicibacterium paratuberculosis (strain ATCC BAA-968 / K-10) (Mycobacterium paratuberculosis) protein is Medium/long-chain-fatty-acid--[acyl-carrier-protein] ligase MbtM (mbtM).